The following is a 196-amino-acid chain: ECF RNA polymerase sigma factor SigM (196 aa).

The tract at residues 39 to 105 (LFRRHHRQLH…ACLDRLRRAK (67 aa)) is sigma-70 factor domain-2. The short motif at 63 to 66 (DALQ) is the Polymerase core binding element. The tract at residues 130–181 (AVQRALMRLPVEQRAAVVAVDMQGYSIADTARMLGVAEGTVKSRCARARARL) is sigma-70 factor domain-4. Positions 156-175 (IADTARMLGVAEGTVKSRCA) form a DNA-binding region, H-T-H motif.

The protein belongs to the sigma-70 factor family. ECF subfamily. In terms of assembly, interacts transiently with the RNA polymerase catalytic core formed by RpoA, RpoB, RpoC and RpoZ (2 alpha, 1 beta, 1 beta' and 1 omega subunit) to form the RNA polymerase holoenzyme that can initiate transcription. Interacts (via sigma-70 factor domain-4) with anti-sigma-M factor RsmA (AC L7N5D7).

Functionally, sigma factors are initiation factors that promote the attachment of RNA polymerase to specific initiation sites and are then released. Extracytoplasmic function (ECF) sigma factors are held in an inactive form by an anti-sigma factor (RsaM, AC L7N5D7) until released by regulated intramembrane proteolysis. This sigma factor is required for the synthesis of surface or secreted molecules. This Mycobacterium tuberculosis (strain ATCC 25618 / H37Rv) protein is ECF RNA polymerase sigma factor SigM (sigM).